We begin with the raw amino-acid sequence, 368 residues long: Phospho-N-acetylmuramoyl-pentapeptide-transferase (368 aa).

Helical transmembrane passes span 50–70, 95–115, 117–137, 156–176, 183–203, 218–238, 242–262, 284–304, and 347–367; these read LLALGLGFSLAAIAGYWVVPL, PTMGGIFAIPAGLLPALILAG, SPLVWALAFVTLAYATIGWLD, LCLQFGAAFLFCLWLISQQGW, ITLPFGWSLALSLLFWPLAVF, LDGLAGGTGAAVLAGLGLWLA, PAIATFCCSLAGGFLGFLLHN, AIAIVANCLWVLLVMGGLFVL, and TQVVASFYGLTLLLIASCWLL.

The protein belongs to the glycosyltransferase 4 family. MraY subfamily. It depends on Mg(2+) as a cofactor.

Its subcellular location is the cell inner membrane. It catalyses the reaction UDP-N-acetyl-alpha-D-muramoyl-L-alanyl-gamma-D-glutamyl-meso-2,6-diaminopimeloyl-D-alanyl-D-alanine + di-trans,octa-cis-undecaprenyl phosphate = di-trans,octa-cis-undecaprenyl diphospho-N-acetyl-alpha-D-muramoyl-L-alanyl-D-glutamyl-meso-2,6-diaminopimeloyl-D-alanyl-D-alanine + UMP. Its pathway is cell wall biogenesis; peptidoglycan biosynthesis. Its function is as follows. Catalyzes the initial step of the lipid cycle reactions in the biosynthesis of the cell wall peptidoglycan: transfers peptidoglycan precursor phospho-MurNAc-pentapeptide from UDP-MurNAc-pentapeptide onto the lipid carrier undecaprenyl phosphate, yielding undecaprenyl-pyrophosphoryl-MurNAc-pentapeptide, known as lipid I. This is Phospho-N-acetylmuramoyl-pentapeptide-transferase from Synechococcus sp. (strain ATCC 27144 / PCC 6301 / SAUG 1402/1) (Anacystis nidulans).